The chain runs to 179 residues: Large ribosomal subunit protein uL5 (179 aa).

Belongs to the universal ribosomal protein uL5 family. Part of the 50S ribosomal subunit; part of the 5S rRNA/L5/L18/L25 subcomplex. Contacts the 5S rRNA and the P site tRNA. Forms a bridge to the 30S subunit in the 70S ribosome.

In terms of biological role, this is one of the proteins that bind and probably mediate the attachment of the 5S RNA into the large ribosomal subunit, where it forms part of the central protuberance. In the 70S ribosome it contacts protein S13 of the 30S subunit (bridge B1b), connecting the 2 subunits; this bridge is implicated in subunit movement. Contacts the P site tRNA; the 5S rRNA and some of its associated proteins might help stabilize positioning of ribosome-bound tRNAs. This chain is Large ribosomal subunit protein uL5, found in Haemophilus influenzae (strain 86-028NP).